The sequence spans 356 residues: MGLCQSEEEKVGTLKSRAIDKEIKQLQTSEERTVKLLLLGAGECGKSTVLKQMRLLTSKQYTDEELLTQAKLVYTNIVIEMDHLVKAMPAAGLNFSDPMREHDVHMLTLYIKDMQHKNFQQDAADHVEKLWKDPVVKRLYAERKELNIRDIGDNTEYFFENLPRISKEDYHPNATDTLLLRTKTTGIVEVGFEIKKVKFRVFDVGGQRSERKKWIHCFEDVNAIIFIAALSEYNEVLFEDETTNRMIESMRLFESICNSRWFHNTNIILFLNKKDLFEEKIKKENIHKAFPEYRGEQNYAETVAFIKTKFEALSNNPKKTFYVHETCATDTNQVQKILDSVISMIIQSNLHKSGLY.

Residue Gly-2 is the site of N-myristoyl glycine attachment. Cys-4 carries S-palmitoyl cysteine lipidation. In terms of domain architecture, G-alpha spans 32-356; that stretch reads RTVKLLLLGA…QSNLHKSGLY (325 aa). The segment at 35–48 is G1 motif; it reads KLLLLGAGECGKST. GTP-binding residues include Glu-43, Gly-45, Lys-46, Ser-47, Thr-48, Asp-153, Leu-178, Thr-184, Gly-206, Asn-272, Lys-273, Asp-275, and Ala-328. Ser-47 is a binding site for Mg(2+). Residues 176 to 184 are G2 motif; it reads DTLLLRTKT. Position 184 (Thr-184) interacts with Mg(2+). A G3 motif region spans residues 199 to 208; it reads FRVFDVGGQR. Residues 268–275 form a G4 motif region; sequence ILFLNKKD. The segment at 326–331 is G5 motif; that stretch reads TCATDT.

The protein belongs to the G-alpha family. G(q) subfamily. G proteins are composed of 3 units; alpha, beta and gamma. The alpha chain contains the guanine nucleotide binding site. Requires Mg(2+) as cofactor.

Guanine nucleotide-binding proteins (G proteins) are involved as modulators or transducers in various transmembrane signaling systems. Involved in behavioral responses to P.aeruginosa by controlling the expression of daf-7, a member of the TGF-beta family, in ASJ sensory neurons. The polypeptide is Guanine nucleotide-binding protein alpha-2 subunit (gpa-2) (Caenorhabditis elegans).